The following is a 213-amino-acid chain: 5-deoxy-D-ribulose 1-phosphate aldolase (213 aa).

Residues 28–29 (GN), 45–46 (SG), and 74–76 (SSE) contribute to the substrate site. The active-site Proton donor/acceptor is Glu-76. Glu-76, His-95, His-97, and His-157 together coordinate Mn(2+).

Belongs to the aldolase class II family. In terms of assembly, forms homooligomers, possibly homotetramers. Mn(2+) serves as cofactor.

It catalyses the reaction 5-deoxy-D-ribulose 1-phosphate = dihydroxyacetone phosphate + acetaldehyde. The protein operates within carbohydrate degradation. Functionally, catalyzes the cleavage of 5-deoxy-D-ribulose 1-phosphate to yield dihydroxyacetone phosphate (DHAP) and acetaldehyde, as part of a 5-deoxyribose salvage pathway that recycles this toxic radical SAM enzyme by-product to mainstream metabolites. Is also able to catalyze the reverse reaction, using several aldehydes as substrate, with acetaldehyde being the preferred substrate. The protein is 5-deoxy-D-ribulose 1-phosphate aldolase of Bacillus thuringiensis serovar kurstaki (strain ATCC 35866 / NRRL B-4488 / HD73).